The chain runs to 633 residues: Carbon catabolite-derepressing protein kinase (633 aa).

Positions 1–16 (MSSNNNTNTAPANANS) are enriched in low complexity. Positions 1-46 (MSSNNNTNTAPANANSSHHHHHHHHHHHHHGHGGSNSTLNNPKSSL) are disordered. Basic residues predominate over residues 17–32 (SHHHHHHHHHHHHHGH). One can recognise a Protein kinase domain in the interval 55–306 (YQIVKTLGEG…IHEIMQDDWF (252 aa)). ATP contacts are provided by residues 61 to 69 (LGEGSFGKV) and Lys84. The Proton acceptor role is filled by Asp177. Phosphothreonine; by autocatalysis is present on Thr210. The tract at residues 313-392 (YLLPPDLKPH…YMLIKENKSL (80 aa)) is auto-inhibitory domain (AID). The tract at residues 317-345 (PDLKPHPEEENENNDSKKDGSSPDNDEID) is disordered. Over residues 319–337 (LKPHPEEENENNDSKKDGS) the composition is skewed to basic and acidic residues. The region spanning 348 to 389 (LVNILSSTMGYEKDEIYESLESSEDTPAFNEIRDAYMLIKEN) is the UBA domain. The disordered stretch occupies residues 409–434 (FLSQSPPTFQQQSKSHQKSQVDHETA). Ser413 carries the post-translational modification Phosphoserine. Lys461 participates in a covalent cross-link: Glycyl lysine isopeptide (Lys-Gly) (interchain with G-Cter in ubiquitin). Position 487 is a phosphoserine (Ser487). Residue Lys549 forms a Glycyl lysine isopeptide (Lys-Gly) (interchain with G-Cter in SUMO) linkage. Ser632 is subject to Phosphoserine.

It belongs to the protein kinase superfamily. CAMK Ser/Thr protein kinase family. SNF1 subfamily. As to quaternary structure, component of the AMP-activated protein kinase complex also known as the SNF1 kinase complex (Snf1c), a heterotrimeric complex composed of an alpha subunit (SNF1), a regulatory subunit beta (GAL83 and substoichiometric alternate beta subunits SIP1 and SIP2), and a regulatory subunit gamma (SNF4). Interacts with the transcriptional activator SIP4. Interacts with SAK1. Interacts with CTK1: Interacts with adenylate cyclase CYR1. Post-translationally, phosphorylation at Thr-210 in response to glucose limitation leads to activation of kinase activity. ADP, but not AMP, protects the enzyme from dephosphorylation at Thr-210 by GLC7. In terms of processing, sumoylation by the SUMO (E3) ligase MMS21 leads to inhibition by interaction of SUMO attached to Lys-549 with a SUMO-interacting sequence motif located near the active site of SNF1, and by targeting SNF1 for glucose-induced destruction via the SLX5-SLX8 (SUMO-directed) ubiquitin ligase.

The protein localises to the cytoplasm. Its subcellular location is the nucleus. It localises to the nucleus membrane. The catalysed reaction is L-seryl-[protein] + ATP = O-phospho-L-seryl-[protein] + ADP + H(+). It carries out the reaction L-threonyl-[protein] + ATP = O-phospho-L-threonyl-[protein] + ADP + H(+). With respect to regulation, the kinase activity is positively regulated by SNF4 via sequestration of the SNF1 auto-inhibitory domain (AID). Functionally, serine/threonine protein kinase essential for release from glucose repression. Catalytic subunit of the AMP-activated protein kinase complex also known as the SNF1 kinase complex (Snf1c), a central regulator of cellular energy homeostasis, which, in response to a fall in intracellular ATP levels, activates energy-producing pathways and inhibits energy-consuming processes. The complex phosphorylates histone H3 to form H3S10ph, which promotes H3K14ac formation, leading to transcriptional activation through TBP recruitment to the promoters. The complex also negatively regulates the HOG1 MAPK pathway in ER stress response including unfolded protein response (UPR). Under nutrient/energy depletion, the complex phosphorylates and activates PAS kinase PSK1 which in turn activates PBS1, leading to the inhibition of the TORC1 signaling pathway. SNF1 also interacts and phosphorylates adenylate cyclase CYR1 and negatively regulates the protein kinase A signaling pathway. Also phosphorylates and regulates the transcriptional activator CAT8. This is Carbon catabolite-derepressing protein kinase from Saccharomyces cerevisiae (strain ATCC 204508 / S288c) (Baker's yeast).